Here is a 689-residue protein sequence, read N- to C-terminus: FAST kinase domain-containing protein 2, mitochondrial (689 aa).

2 positions are modified to phosphoserine: S113 and S126. The region spanning 617 to 674 (VAVLCVPKSVYCLNSCHPRGLMAMKIRHLNVMGFHVILIHNWELKKLKMEDAVTFVRK) is the RAP domain.

The protein belongs to the FAST kinase family. Monomer. Found in a complex with GRSF1, DDX28, DHX30 and FASTKD5. Associates with the 16S mitochondrial rRNA (16S mt-rRNA). Forms a regulatory protein-RNA complex, consisting of RCC1L, NGRN, RPUSD3, RPUSD4, TRUB2, FASTKD2 and 16S mt-rRNA. In terms of tissue distribution, ubiquitously expressed. Expression detected in spleen, testis, colon, heart, smooth muscle, kidney, brain, lung, liver, brown and white adipose tissue with highest expression in testis, heart and smooth muscle.

The protein localises to the mitochondrion matrix. It is found in the mitochondrion nucleoid. Functionally, plays an important role in assembly of the mitochondrial large ribosomal subunit. As a component of a functional protein-RNA module, consisting of RCC1L, NGRN, RPUSD3, RPUSD4, TRUB2, FASTKD2 and 16S mitochondrial ribosomal RNA (16S mt-rRNA), controls 16S mt-rRNA abundance and is required for intra-mitochondrial translation. May play a role in mitochondrial apoptosis. The polypeptide is FAST kinase domain-containing protein 2, mitochondrial (Fastkd2) (Mus musculus (Mouse)).